The primary structure comprises 188 residues: Elongation factor P (188 aa).

This sequence belongs to the elongation factor P family.

It is found in the cytoplasm. It participates in protein biosynthesis; polypeptide chain elongation. In terms of biological role, involved in peptide bond synthesis. Stimulates efficient translation and peptide-bond synthesis on native or reconstituted 70S ribosomes in vitro. Probably functions indirectly by altering the affinity of the ribosome for aminoacyl-tRNA, thus increasing their reactivity as acceptors for peptidyl transferase. This Wolbachia pipientis subsp. Culex pipiens (strain wPip) protein is Elongation factor P.